Here is a 246-residue protein sequence, read N- to C-terminus: Protein PHLOEM PROTEIN 2-LIKE A1 (246 aa).

In terms of tissue distribution, vascular tissues, specifically in phloem companion cell-sieve element complexes.

This Arabidopsis thaliana (Mouse-ear cress) protein is Protein PHLOEM PROTEIN 2-LIKE A1 (PP2A1).